The primary structure comprises 290 residues: Protoheme IX farnesyltransferase 1 (290 aa).

The next 8 helical transmembrane spans lie at 8-28 (ITKP…FFLA), 36-56 (FLLL…GCVV), 85-105 (AAFV…FQVV), 108-128 (LSAV…TMWY), 131-151 (NSVY…LVGY), 152-172 (LAVT…FCLW), 211-231 (AYVV…EAGY), and 269-289 (LLVV…LPFI).

The protein belongs to the UbiA prenyltransferase family. Protoheme IX farnesyltransferase subfamily.

The protein resides in the cell inner membrane. The enzyme catalyses heme b + (2E,6E)-farnesyl diphosphate + H2O = Fe(II)-heme o + diphosphate. It participates in porphyrin-containing compound metabolism; heme O biosynthesis; heme O from protoheme: step 1/1. Converts heme B (protoheme IX) to heme O by substitution of the vinyl group on carbon 2 of heme B porphyrin ring with a hydroxyethyl farnesyl side group. The polypeptide is Protoheme IX farnesyltransferase 1 (Vibrio campbellii (strain ATCC BAA-1116)).